The primary structure comprises 427 residues: MSRSESLFAQAQKHIPGGVNSPVRAFKSVGGTPLFFKHAEGAYVVDEDDKRYVDYVGSWGPMILGHGHPQVLDAVRNQLQHGLSYGAPTAMETEMADLVCSLVPSMEMVRMVSSGTEATMSAIRLARGYTGRDAIIKFEGCYHGHSDSLLVKAGSGLLTQGVPSSAGVPADFAKHTLTLPFNDIAAVEKTLAEVGQTVACIIVEPVAGNMNCVPPAPGFLEGLREQCDKHGVVLIFDEVMTGFRVSLGGAQGYYGITPDLSTFGKIVGGGMPVGCFGGKREIMGCIAPLGPVYQAGTLSGNPLAMAAGLTTLKLISRPGFHDELSDFTSRMLDGLQQRADAAGVPFVTTQAGAMFGLYFSGADDIVTFDDVMASDAERFKRFFHLMLDGGVYLAPSAFEAGFTSIAHGDKELQITLDAAERAFAALK.

Residue Lys265 is modified to N6-(pyridoxal phosphate)lysine.

This sequence belongs to the class-III pyridoxal-phosphate-dependent aminotransferase family. HemL subfamily. Homodimer. The cofactor is pyridoxal 5'-phosphate.

It localises to the cytoplasm. It catalyses the reaction (S)-4-amino-5-oxopentanoate = 5-aminolevulinate. The protein operates within porphyrin-containing compound metabolism; protoporphyrin-IX biosynthesis; 5-aminolevulinate from L-glutamyl-tRNA(Glu): step 2/2. The polypeptide is Glutamate-1-semialdehyde 2,1-aminomutase (Pseudomonas putida (strain W619)).